Reading from the N-terminus, the 162-residue chain is SsrA-binding protein (162 aa).

Positions 137–154 (HDKREDTKAREWDREKAR) are enriched in basic and acidic residues. A disordered region spans residues 137–162 (HDKREDTKAREWDREKARIMKNKHRG).

Belongs to the SmpB family.

It is found in the cytoplasm. In terms of biological role, required for rescue of stalled ribosomes mediated by trans-translation. Binds to transfer-messenger RNA (tmRNA), required for stable association of tmRNA with ribosomes. tmRNA and SmpB together mimic tRNA shape, replacing the anticodon stem-loop with SmpB. tmRNA is encoded by the ssrA gene; the 2 termini fold to resemble tRNA(Ala) and it encodes a 'tag peptide', a short internal open reading frame. During trans-translation Ala-aminoacylated tmRNA acts like a tRNA, entering the A-site of stalled ribosomes, displacing the stalled mRNA. The ribosome then switches to translate the ORF on the tmRNA; the nascent peptide is terminated with the 'tag peptide' encoded by the tmRNA and targeted for degradation. The ribosome is freed to recommence translation, which seems to be the essential function of trans-translation. The polypeptide is SsrA-binding protein (Aeromonas hydrophila subsp. hydrophila (strain ATCC 7966 / DSM 30187 / BCRC 13018 / CCUG 14551 / JCM 1027 / KCTC 2358 / NCIMB 9240 / NCTC 8049)).